Consider the following 253-residue polypeptide: uncharacterized protein (253 aa).

Residue A2 is modified to N-acetylalanine.

This sequence belongs to the NAD(P)-dependent epimerase/dehydratase family. In terms of assembly, homodimer.

This is an uncharacterized protein from Arabidopsis thaliana (Mouse-ear cress).